The chain runs to 140 residues: Protein E6 (140 aa).

2 zinc fingers span residues Cys-27–Cys-63 and Cys-100–Cys-136.

Belongs to the papillomaviridae E6 protein family. As to quaternary structure, forms homodimers. Interacts with ubiquitin-protein ligase UBE3A/E6-AP; this interaction stimulates UBE3A ubiquitin activity. Interacts with host BAK1.

The protein resides in the host cytoplasm. Its subcellular location is the host nucleus. Functionally, plays a major role in the induction and maintenance of cellular transformation. E6 associates with host UBE3A/E6-AP ubiquitin-protein ligase and modulates its activity. Protects host keratinocytes from apoptosis by mediating the degradation of host BAK1. May also inhibit host immune response. The protein is Protein E6 of Human papillomavirus 65.